The sequence spans 595 residues: 2-succinyl-5-enolpyruvyl-6-hydroxy-3-cyclohexene-1-carboxylate synthase (595 aa).

It belongs to the TPP enzyme family. MenD subfamily. Homodimer. Mg(2+) serves as cofactor. The cofactor is Mn(2+). Thiamine diphosphate is required as a cofactor.

The catalysed reaction is isochorismate + 2-oxoglutarate + H(+) = 5-enolpyruvoyl-6-hydroxy-2-succinyl-cyclohex-3-ene-1-carboxylate + CO2. It functions in the pathway quinol/quinone metabolism; 1,4-dihydroxy-2-naphthoate biosynthesis; 1,4-dihydroxy-2-naphthoate from chorismate: step 2/7. The protein operates within cofactor biosynthesis; phylloquinone biosynthesis. Catalyzes the thiamine diphosphate-dependent decarboxylation of 2-oxoglutarate and the subsequent addition of the resulting succinic semialdehyde-thiamine pyrophosphate anion to isochorismate to yield 2-succinyl-5-enolpyruvyl-6-hydroxy-3-cyclohexene-1-carboxylate (SEPHCHC). The chain is 2-succinyl-5-enolpyruvyl-6-hydroxy-3-cyclohexene-1-carboxylate synthase from Synechocystis sp. (strain ATCC 27184 / PCC 6803 / Kazusa).